The chain runs to 447 residues: Beclin-1 (447 aa).

The span at 44 to 53 shows a compositional bias: low complexity; sequence PPLTAAPARP. The tract at residues 44–71 is disordered; sequence PPLTAAPARPGDAQEESALSEEAFTEGR. Positions 105 to 124 match the BH3 motif; the sequence is TMENLSRRLKVTGDLFDIMS. The stretch at 139-266 forms a coiled coil; that stretch reads DTLLDQLDTQ…QLDKLKKTNV (128 aa). The tract at residues 242 to 447 is evolutionary conserved domain (ECD); it reads DELKSVENQM…AWVSSQFYNK (206 aa). Positions 422–447 are required for membrane-association; that stretch reads WTKALKFMLTNLKWGLAWVSSQFYNK.

The protein belongs to the beclin family. In terms of assembly, component of the PI3K (PI3KC3/PI3K-III/class III phosphatidylinositol 3-kinase) complex. Post-translationally, may be proteolytically processed by caspases; the C-terminal fragment(s) may induce apoptosis.

Its subcellular location is the cytoplasm. It is found in the golgi apparatus. The protein localises to the trans-Golgi network membrane. It localises to the endosome membrane. The protein resides in the endoplasmic reticulum membrane. Its subcellular location is the mitochondrion membrane. It is found in the cytoplasmic vesicle. The protein localises to the autophagosome. Plays a central role in autophagy. Acts as core subunit of different PI3K complex forms that mediate formation of phosphatidylinositol 3-phosphate and are believed to play a role in multiple membrane trafficking pathways such as initiation of autophagosomes, maturation of autophagosomes and endocytosis. Involved in regulation of degradative endocytic trafficking and required for the abscission step in cytokinesis, probably in the context of PI3KC3-C2. The protein is Beclin-1 (BECN1) of Gallus gallus (Chicken).